Consider the following 352-residue polypeptide: UDP-N-acetylglucosamine--N-acetylmuramyl-(pentapeptide) pyrophosphoryl-undecaprenol N-acetylglucosamine transferase (352 aa).

UDP-N-acetyl-alpha-D-glucosamine contacts are provided by Ser195 and Gln287.

It belongs to the glycosyltransferase 28 family. MurG subfamily.

It localises to the cell membrane. It carries out the reaction Mur2Ac(oyl-L-Ala-gamma-D-Glu-L-Lys-D-Ala-D-Ala)-di-trans,octa-cis-undecaprenyl diphosphate + UDP-N-acetyl-alpha-D-glucosamine = beta-D-GlcNAc-(1-&gt;4)-Mur2Ac(oyl-L-Ala-gamma-D-Glu-L-Lys-D-Ala-D-Ala)-di-trans,octa-cis-undecaprenyl diphosphate + UDP + H(+). It functions in the pathway cell wall biogenesis; peptidoglycan biosynthesis. Its function is as follows. Cell wall formation. Catalyzes the transfer of a GlcNAc subunit on undecaprenyl-pyrophosphoryl-MurNAc-pentapeptide (lipid intermediate I) to form undecaprenyl-pyrophosphoryl-MurNAc-(pentapeptide)GlcNAc (lipid intermediate II). This Streptococcus pneumoniae serotype 4 (strain ATCC BAA-334 / TIGR4) protein is UDP-N-acetylglucosamine--N-acetylmuramyl-(pentapeptide) pyrophosphoryl-undecaprenol N-acetylglucosamine transferase.